Consider the following 262-residue polypeptide: Type III pantothenate kinase (262 aa).

6–13 (DVGNTNAV) provides a ligand contact to ATP. Substrate-binding positions include Y100 and 107–110 (GADR). The active-site Proton acceptor is D109. D129 lines the K(+) pocket. T132 contacts ATP. Residue T184 coordinates substrate.

It belongs to the type III pantothenate kinase family. In terms of assembly, homodimer. Requires NH4(+) as cofactor. K(+) is required as a cofactor.

Its subcellular location is the cytoplasm. It carries out the reaction (R)-pantothenate + ATP = (R)-4'-phosphopantothenate + ADP + H(+). Its pathway is cofactor biosynthesis; coenzyme A biosynthesis; CoA from (R)-pantothenate: step 1/5. Its function is as follows. Catalyzes the phosphorylation of pantothenate (Pan), the first step in CoA biosynthesis. The chain is Type III pantothenate kinase from Bacillus anthracis (strain A0248).